A 261-amino-acid polypeptide reads, in one-letter code: U11/U12 small nuclear ribonucleoprotein 31 kDa protein (261 aa).

The segment at 18 to 51 is disordered; the sequence is YYRYSSVAAPPPSNPKHQPSSSAKSSAPGGGSGG. The RRM domain occupies 57–135; that stretch reads STLYVSNLDF…RKLTVSIAAD (79 aa). The CCHC-type zinc finger occupies 153–169; the sequence is RCYECGDEGHLSYECPK. The interval 165–261 is disordered; the sequence is YECPKNQLGP…YFSDESDDED (97 aa). A compositionally biased stretch (basic and acidic residues) spans 226–235; the sequence is AGERLRKREA.

As to quaternary structure, component of the U11/U12 snRNPs that are part of the U12-type spliceosome. In terms of tissue distribution, ubiquitous. Abundantly expressed in the shoot apical neristem.

The protein localises to the nucleus. In terms of biological role, RNA chaperone required for proper U12 intron splicing and for normal growth and development of plants. Mainly responsible for meristem activity. Plays a role in regulating cell division. This chain is U11/U12 small nuclear ribonucleoprotein 31 kDa protein (SNRNP31), found in Arabidopsis thaliana (Mouse-ear cress).